The following is a 763-amino-acid chain: Amyloid beta precursor like protein 2 (763 aa).

The N-terminal stretch at 1–31 is a signal peptide; the sequence is MAATGTAAAAATGRLLLLLLVGLTAPALALA. The Extracellular portion of the chain corresponds to 32–692; it reads GYIEALAANA…PLREDFSLSS (661 aa). Residues 46–139 are GFLD subdomain; that stretch reads AVAEPQIAMF…PFKCLVGEFV (94 aa). Residues 46–205 enclose the E1 domain; the sequence is AVAEPQIAMF…HGTEYVCCPQ (160 aa). 6 disulfide bridges follow: cysteine 56-cysteine 80, cysteine 91-cysteine 133, cysteine 116-cysteine 123, cysteine 149-cysteine 203, cysteine 160-cysteine 190, and cysteine 174-cysteine 202. Residues 147–205 form a cuBD subdomain region; it reads EKCQFFHKERMEVCENHQHWHTVVKEACLTQGMTLYSYGMLLPCGVDQFHGTEYVCCPQ. Cu cation-binding residues include histidine 163, histidine 167, and tyrosine 184. Residues 211 to 299 form a disordered region; the sequence is SVSKEEEEED…EPGSDGTMSD (89 aa). Composition is skewed to acidic residues over residues 215–233 and 242–269; these read EEEE…EEDY and TEAD…EVVE. Residues 270 to 282 show a composition bias toward basic and acidic residues; the sequence is DRDYYYDTFKGDD. The BPTI/Kunitz inhibitor domain maps to 306-364; that stretch reads VKAVCSQEAMTGPCRAVMPRWYFDLSKGKCVRFIYGGCGGNRNNFESEDYCMAVCKAMI. Intrachain disulfides connect cysteine 310–cysteine 360, cysteine 319–cysteine 343, and cysteine 335–cysteine 356. The region spanning 373–564 is the E2 domain; sequence DVDVYFETSA…QEIQEEIDEL (192 aa). At serine 590 the chain carries Phosphoserine; by FAM20C. Serine 626 carries O-linked (Xyl...) (chondroitin sulfate) serine glycosylation. The helical transmembrane segment at 693 to 716 threads the bilayer; it reads SALIGLLVIAVAIATVIVISLVML. Residues 717–763 are Cytoplasmic-facing; sequence RKRQYGTISHGIVEVDPMLTPEERHLNKMQNHGYENPTYKYLEQMQI. An interaction with DAB2 region spans residues 749-763; the sequence is GYENPTYKYLEQMQI. Positions 750 to 755 match the NPXY motif motif; that stretch reads YENPTY.

It belongs to the APP family. Interacts with CPEB1. Interacts (via NPXY motif) with DAB2 (via PID domain); the interaction is impaired by tyrosine phosphorylation of the NPXY motif. Interacts (via cytoplasmic domain) with APBB2/FE65L. Interacts (via intracellular domain) with APBB3/FE65L2. Post-translationally, the BPTI/Kunitz inhibitor domain is O-glycosylated. In terms of tissue distribution, expressed in placenta, brain, heart, lung, liver, kidney and endothelial tissues.

It is found in the cell membrane. The protein localises to the nucleus. Its function is as follows. May play a role in the regulation of hemostasis. The soluble form may have inhibitory properties towards coagulation factors. May interact with cellular G-protein signaling pathways. May bind to the DNA 5'-GTCACATG-3'(CDEI box). Inhibits trypsin, chymotrypsin, plasmin, factor XIA and plasma and glandular kallikrein. Modulates the Cu/Zn nitric oxide-catalyzed autodegradation of GPC1 heparan sulfate side chains in fibroblasts. The polypeptide is Amyloid beta precursor like protein 2 (Homo sapiens (Human)).